Here is a 386-residue protein sequence, read N- to C-terminus: Protein phosphatase methylesterase 1 (386 aa).

Residues 1 to 38 (MSALEKSMHLGRLPSRPPLPGSGGSQSGAKMRMGPGRK) are disordered. Position 15 is a phosphoserine (S15). R16 bears the Asymmetric dimethylarginine; alternate mark. Position 16 is an omega-N-methylarginine; alternate (R16). Position 42 is a phosphoserine (S42). The active site involves S156. The span at 254–265 (IIEEEEEDEEGS) shows a compositional bias: acidic residues. Positions 254 to 280 (IIEEEEEDEEGSESISKRKKEDDMETK) are disordered. A compositionally biased stretch (basic and acidic residues) spans 268–280 (ISKRKKEDDMETK). H349 is an active-site residue.

It belongs to the AB hydrolase superfamily. As to quaternary structure, binds PPP2CA and PPP2CB. Phosphorylated by SIK1 following increases in intracellular sodium, leading to dissociation from the protein phosphatase 2A (PP2A) complex and subsequent dephosphorylation of sodium/potassium-transporting ATPase ATP1A1.

The catalysed reaction is [phosphatase 2A protein]-C-terminal L-leucine methyl ester + H2O = [phosphatase 2A protein]-C-terminal L-leucine + methanol + H(+). Functionally, demethylates proteins that have been reversibly carboxymethylated. Demethylates PPP2CB (in vitro) and PPP2CA. Binding to PPP2CA displaces the manganese ion and inactivates the enzyme. The polypeptide is Protein phosphatase methylesterase 1 (PPME1) (Pongo abelii (Sumatran orangutan)).